The chain runs to 283 residues: 4-diphosphocytidyl-2-C-methyl-D-erythritol kinase (283 aa).

Residue K12 is part of the active site. 94 to 104 (PAQAGLGGGSS) lines the ATP pocket. The active site involves D136.

It belongs to the GHMP kinase family. IspE subfamily.

It carries out the reaction 4-CDP-2-C-methyl-D-erythritol + ATP = 4-CDP-2-C-methyl-D-erythritol 2-phosphate + ADP + H(+). It participates in isoprenoid biosynthesis; isopentenyl diphosphate biosynthesis via DXP pathway; isopentenyl diphosphate from 1-deoxy-D-xylulose 5-phosphate: step 3/6. Its function is as follows. Catalyzes the phosphorylation of the position 2 hydroxy group of 4-diphosphocytidyl-2C-methyl-D-erythritol. The polypeptide is 4-diphosphocytidyl-2-C-methyl-D-erythritol kinase (Acidovorax sp. (strain JS42)).